We begin with the raw amino-acid sequence, 252 residues long: 3-dehydroquinate dehydratase (252 aa).

Residues Ser-21, 46 to 48 (EWR), and Arg-82 contribute to the 3-dehydroquinate site. The active-site Proton donor/acceptor is His-143. Catalysis depends on Lys-170, which acts as the Schiff-base intermediate with substrate. 3-dehydroquinate-binding residues include Arg-213, Ser-232, and Gln-236.

Belongs to the type-I 3-dehydroquinase family. As to quaternary structure, homodimer.

The enzyme catalyses 3-dehydroquinate = 3-dehydroshikimate + H2O. It functions in the pathway metabolic intermediate biosynthesis; chorismate biosynthesis; chorismate from D-erythrose 4-phosphate and phosphoenolpyruvate: step 3/7. Involved in the third step of the chorismate pathway, which leads to the biosynthesis of aromatic amino acids. Catalyzes the cis-dehydration of 3-dehydroquinate (DHQ) and introduces the first double bond of the aromatic ring to yield 3-dehydroshikimate. The protein is 3-dehydroquinate dehydratase of Escherichia coli (strain 55989 / EAEC).